The primary structure comprises 176 residues: RNA pyrophosphohydrolase (176 aa).

Residues 6 to 149 form the Nudix hydrolase domain; that stretch reads GYRPNVGIVI…KRDVYRRVMK (144 aa). The Nudix box motif lies at 38-59; the sequence is GGINPGESAEQAMYRELFEEVG.

Belongs to the Nudix hydrolase family. RppH subfamily. It depends on a divalent metal cation as a cofactor.

Functionally, accelerates the degradation of transcripts by removing pyrophosphate from the 5'-end of triphosphorylated RNA, leading to a more labile monophosphorylated state that can stimulate subsequent ribonuclease cleavage. This chain is RNA pyrophosphohydrolase, found in Shigella boydii serotype 4 (strain Sb227).